The sequence spans 81 residues: Cytotoxin (81 aa).

An N-terminal signal peptide occupies residues 1–21 (MKTLLLTTVVVTIVCLDLEYT). 4 disulfide bridges follow: Cys24/Cys42, Cys35/Cys59, Cys63/Cys74, and Cys75/Cys80.

Belongs to the three-finger toxin family. Short-chain subfamily. Type IA cytotoxin sub-subfamily. As to quaternary structure, monomer in solution; Homodimer and oligomer in the presence of negatively charged lipids forming a pore with a size ranging between 20 and 30 Angstroms. Expressed by the venom gland.

Its subcellular location is the secreted. It localises to the target cell membrane. Functionally, shows cytolytic activity on many different cells by forming pore in lipid membranes. In vivo, increases heart rate or kills the animal by cardiac arrest. In addition, it binds to heparin with high affinity, interacts with Kv channel-interacting protein 1 (KCNIP1) in a calcium-independent manner, and binds to integrin alpha-V/beta-3 (ITGAV/ITGB3) with moderate affinity. This Naja sputatrix (Malayan spitting cobra) protein is Cytotoxin.